Consider the following 334-residue polypeptide: MNTEATHDQNEAQTTGVRLRNAREQLGLSQQAVAERLCLKVSTVRDIEEDKAPSDLASTFLRGYIRSYARLVHVPEEELLPGLEKQAPLRAAKVAPMQSFSLGKRRKKRDGWLMSFTWLVLFVVVGLTGAWWWQNHKAQQEEITTMADQSTAELNADKDSGQNVPLDTRDATSQDTTPAQTAPAPATPVDSTAATQTPAATATATQNTVVAPSQANVDTAATSAAPAATETPSALPTSQAGVAAPAADPNALVMNFTADCWLEVTDATGKKLFSGMQRKDGNLNLTGQAPYKLKIGAPAAVQIQYQGKPVDLSRFIRTNQVARLTLNAEPTPAQ.

Residues 1 to 111 (MNTEATHDQN…LGKRRKKRDG (111 aa)) are Cytoplasmic-facing. The 53-residue stretch at 19 to 71 (LRNAREQLGLSQQAVAERLCLKVSTVRDIEEDKAPSDLASTFLRGYIRSYARL) folds into the HTH cro/C1-type domain. Positions 30-49 (QQAVAERLCLKVSTVRDIEE) form a DNA-binding region, H-T-H motif. Residues 112–132 (WLMSFTWLVLFVVVGLTGAWW) form a helical; Signal-anchor for type II membrane protein membrane-spanning segment. Residues 133 to 334 (WQNHKAQQEE…TLNAEPTPAQ (202 aa)) lie on the Periplasmic side of the membrane. Disordered regions lie at residues 155-207 (NADK…ATQN) and 221-241 (ATSAAPAATETPSALPTSQAG). Over residues 176–207 (TTPAQTAPAPATPVDSTAATQTPAATATATQN) the composition is skewed to low complexity.

This sequence belongs to the RodZ family.

It localises to the cell inner membrane. Its function is as follows. Cytoskeletal protein that is involved in cell-shape control through regulation of the length of the long axis. The sequence is that of Cytoskeleton protein RodZ from Salmonella schwarzengrund (strain CVM19633).